The following is a 239-amino-acid chain: Gamma-lactamase MBL2 (239 aa).

Residues His56, His58, Asp60, His61, His141, and Asp165 each contribute to the Zn(2+) site.

Belongs to the metallo-beta-lactamase superfamily.

Gamma-lactamase; part of the Fusarium detoxification of benzoxazolinone cluster 2 (FDB2) involved in the degradation of benzoxazolinones produced by the host plant. Maize, wheat, and rye produce the 2 benzoxazinone phytoanticipins 2,4-dihy-droxy-7-methoxy-1,4-benzoxazin-3-one (DIMBOA) and 2,4-dihydroxy-1,4-benzoxazin-3-one (DIBOA) that, due to their inherent instability once released, spontaneously degrade to the more stable corresponding benzoxazolinones, 6-methoxy-2-benzoxazolinone (MBOA) and 2-benzoxazolinone (BOA), respectively. The first step in the detoxification of benzoxazolinones involves the hydrolysis of the cyclic ester bond of benzoxazolinones by the FDB1 cluster gamma-lactamase MBL1 to aminophenols. MBL1 is able to convert BOA into 2-aminophenol (2-AP), as well as MBOA into 5-methoxy-2-aminophenol (2-AMP). The FDB2 cluster N-malonyltransferase FDB2/NAT1 then metabolizes aminophenols via N-malonylation to non-toxic malonamic acids. FDB2/NAT1 converts 2-AP into N-(2-hydroxyphenyl) malonamic acid (HPMA) and 2-AMP into N-(2-hydroxy-4-methoxyphenyl) malonamic acid (HMPMA). The duplicated dienlactone hydrolases DLH1 and DLH2 may provide redundant function for hydrolyzing the lactone moiety in the BOA molecule. The roles of the amidases and other enzymes encoded by the 2 FDB clusters have not been identified so far. This is Gamma-lactamase MBL2 from Gibberella moniliformis (strain M3125 / FGSC 7600) (Maize ear and stalk rot fungus).